A 1906-amino-acid polypeptide reads, in one-letter code: Zinc metalloprotease ZmpB (1906 aa).

An N-terminal signal peptide occupies residues 1-33 (MFKKDRFSIRKIKGVVGSVFLGSLLMAPSVVDA). The propeptide occupies 34–76 (ATYHYVNKEIISQEAKDLIQTGKPDRNEVVYGLVYQKDQLPQT). An LPXTG sorting signal motif is present at residues 73 to 77 (LPQTG). At T76 the chain carries Pentaglycyl murein peptidoglycan amidated threonine. 2 helical membrane-spanning segments follow: residues 77–98 (GTEA…LLIY) and 105–127 (SVFL…DPVA). Residues 128–1906 (TLALASREGV…TNSFKTSIFK (1779 aa)) lie on the Extracellular side of the membrane. Residues 178-436 (VETPQSITNQ…KASSVSPTDY (259 aa)) form a disordered region. The span at 181-196 (PQSITNQEQARTENQV) shows a compositional bias: polar residues. Basic and acidic residues-rich tracts occupy residues 201-239 (EAPK…KEDS), 252-262 (VESKPEEKVAV), 271-335 (KPAE…KEET), 352-375 (KQTE…REDE), and 383-408 (EPEK…DKIK). Repeat copies occupy residues 277-291 (KVEQ…REDE), 293-315 (APVE…ETPK), 361-375 (KVEQ…REDE), and 380-402 (APVE…ETPK). The 2 X 15 AA repeats of K-V-E-Q-A-G-E-P-V-A-P-R-E-D-E stretch occupies residues 277–375 (KVEQAGEPVA…GEPVAPREDE (99 aa)). The tract at residues 293 to 375 (APVEPEKQPE…GEPVAPREDE (83 aa)) is 2 X 23 AA approximate repeats. A compositionally biased stretch (polar residues) spans 421–436 (LNNQIDKASSVSPTDY). Position 1562 (H1562) interacts with Zn(2+). E1563 is a catalytic residue. Zn(2+)-binding residues include H1566 and E1586.

The protein belongs to the peptidase M26 family. Zn(2+) serves as cofactor. Post-translationally, the Gram-positive cell-wall anchor motif LPXTG is located in the N-terminal part, in contrast to such motifs in other known streptococcal and staphylococcal proteins. The protease could be cleaved by the sortase and anchored in the membrane via the two potential N-terminal transmembrane domains, whereas the propeptide located prior to the LPXTG motif would remain attached to the cell wall peptidoglycan by an amide bond.

It is found in the secreted. It localises to the cell wall. The protein localises to the membrane. Its function is as follows. Is a virulence factor capable of inducing inflammation in the lower respiratory tract, by increasing tumor necrosis factor alpha (TNF-alpha) concentration in the lungs. Also appears to have other functions important in virulence in models of pneumonia and septicemia. The polypeptide is Zinc metalloprotease ZmpB (zmpB) (Streptococcus pneumoniae serotype 4 (strain ATCC BAA-334 / TIGR4)).